Reading from the N-terminus, the 100-residue chain is Urease subunit gamma (100 aa).

Belongs to the urease gamma subunit family. As to quaternary structure, heterotrimer of UreA (gamma), UreB (beta) and UreC (alpha) subunits. Three heterotrimers associate to form the active enzyme.

It is found in the cytoplasm. The enzyme catalyses urea + 2 H2O + H(+) = hydrogencarbonate + 2 NH4(+). Its pathway is nitrogen metabolism; urea degradation; CO(2) and NH(3) from urea (urease route): step 1/1. In Pseudarthrobacter chlorophenolicus (strain ATCC 700700 / DSM 12829 / CIP 107037 / JCM 12360 / KCTC 9906 / NCIMB 13794 / A6) (Arthrobacter chlorophenolicus), this protein is Urease subunit gamma.